A 350-amino-acid chain; its full sequence is Holliday junction branch migration complex subunit RuvB (350 aa).

The large ATPase domain (RuvB-L) stretch occupies residues 1–183; sequence MSAERLVNPH…FVAVHRLVFY (183 aa). ATP is bound by residues Leu-22, Arg-23, Gly-64, Lys-67, Thr-68, Ser-69, 130–132, Arg-173, Tyr-183, and Arg-220; that span reads EDF. Thr-68 is a Mg(2+) binding site. Positions 184–254 are small ATPAse domain (RuvB-S); that stretch reads SDDAMTEIVS…VARDALAQLE (71 aa). Positions 257–350 are head domain (RuvB-H); it reads ELGLDENDRR…ESGPQQATLF (94 aa). Residues Arg-312 and Arg-317 each coordinate DNA. The tract at residues 331–350 is disordered; sequence YPERTLPADDESGPQQATLF.

This sequence belongs to the RuvB family. Homohexamer. Forms an RuvA(8)-RuvB(12)-Holliday junction (HJ) complex. HJ DNA is sandwiched between 2 RuvA tetramers; dsDNA enters through RuvA and exits via RuvB. An RuvB hexamer assembles on each DNA strand where it exits the tetramer. Each RuvB hexamer is contacted by two RuvA subunits (via domain III) on 2 adjacent RuvB subunits; this complex drives branch migration. In the full resolvosome a probable DNA-RuvA(4)-RuvB(12)-RuvC(2) complex forms which resolves the HJ.

It localises to the cytoplasm. The enzyme catalyses ATP + H2O = ADP + phosphate + H(+). Its function is as follows. The RuvA-RuvB-RuvC complex processes Holliday junction (HJ) DNA during genetic recombination and DNA repair, while the RuvA-RuvB complex plays an important role in the rescue of blocked DNA replication forks via replication fork reversal (RFR). RuvA specifically binds to HJ cruciform DNA, conferring on it an open structure. The RuvB hexamer acts as an ATP-dependent pump, pulling dsDNA into and through the RuvAB complex. RuvB forms 2 homohexamers on either side of HJ DNA bound by 1 or 2 RuvA tetramers; 4 subunits per hexamer contact DNA at a time. Coordinated motions by a converter formed by DNA-disengaged RuvB subunits stimulates ATP hydrolysis and nucleotide exchange. Immobilization of the converter enables RuvB to convert the ATP-contained energy into a lever motion, pulling 2 nucleotides of DNA out of the RuvA tetramer per ATP hydrolyzed, thus driving DNA branch migration. The RuvB motors rotate together with the DNA substrate, which together with the progressing nucleotide cycle form the mechanistic basis for DNA recombination by continuous HJ branch migration. Branch migration allows RuvC to scan DNA until it finds its consensus sequence, where it cleaves and resolves cruciform DNA. In Chloroflexus aurantiacus (strain ATCC 29366 / DSM 635 / J-10-fl), this protein is Holliday junction branch migration complex subunit RuvB.